Here is a 293-residue protein sequence, read N- to C-terminus: Phosphoribosylaminoimidazole-succinocarboxamide synthase (293 aa).

It belongs to the SAICAR synthetase family.

The enzyme catalyses 5-amino-1-(5-phospho-D-ribosyl)imidazole-4-carboxylate + L-aspartate + ATP = (2S)-2-[5-amino-1-(5-phospho-beta-D-ribosyl)imidazole-4-carboxamido]succinate + ADP + phosphate + 2 H(+). The protein operates within purine metabolism; IMP biosynthesis via de novo pathway; 5-amino-1-(5-phospho-D-ribosyl)imidazole-4-carboxamide from 5-amino-1-(5-phospho-D-ribosyl)imidazole-4-carboxylate: step 1/2. This chain is Phosphoribosylaminoimidazole-succinocarboxamide synthase, found in Desulfosudis oleivorans (strain DSM 6200 / JCM 39069 / Hxd3) (Desulfococcus oleovorans).